Consider the following 404-residue polypeptide: Cysteine desulfurase IscS (404 aa).

Residues 75-76, Asn155, Gln183, and 203-205 each bind pyridoxal 5'-phosphate; these read AT and SAH. Lys206 carries the N6-(pyridoxal phosphate)lysine modification. Residue Thr243 coordinates pyridoxal 5'-phosphate. The active-site Cysteine persulfide intermediate is the Cys328. Cys328 contributes to the [2Fe-2S] cluster binding site.

Belongs to the class-V pyridoxal-phosphate-dependent aminotransferase family. NifS/IscS subfamily. As to quaternary structure, homodimer. Forms a heterotetramer with IscU, interacts with other sulfur acceptors. It depends on pyridoxal 5'-phosphate as a cofactor.

It localises to the cytoplasm. It catalyses the reaction (sulfur carrier)-H + L-cysteine = (sulfur carrier)-SH + L-alanine. It functions in the pathway cofactor biosynthesis; iron-sulfur cluster biosynthesis. Functionally, master enzyme that delivers sulfur to a number of partners involved in Fe-S cluster assembly, tRNA modification or cofactor biosynthesis. Catalyzes the removal of elemental sulfur atoms from cysteine to produce alanine. Functions as a sulfur delivery protein for Fe-S cluster synthesis onto IscU, an Fe-S scaffold assembly protein, as well as other S acceptor proteins. This chain is Cysteine desulfurase IscS, found in Neisseria gonorrhoeae (strain ATCC 700825 / FA 1090).